Reading from the N-terminus, the 1385-residue chain is PsbD mRNA maturation factor Nac2, chloroplastic (1385 aa).

The transit peptide at 1–45 directs the protein to the chloroplast; it reads MGALPCPAHIEHHQGLSSFGTRRVLRQSVACGAHRSRRRSLWAGA. Over residues 132–152 the composition is skewed to low complexity; that stretch reads GPHGAASATGAGSHSSSAGAP. Disordered regions lie at residues 132-157, 263-282, 304-360, 387-502, 546-568, 726-756, and 840-899; these read GPHGAASATGAGSHSSSAGAPTPTPR, AVAAAAGRQPHEHQQERSSA, TSSR…AAGP, RQQP…GHGQ, NGAGMSDPASASSTSTSSNSGTS, HADSSSSNGNGSGSSSSSGLPQVSEEEVAAA, and ARRA…APSA. Basic and acidic residues predominate over residues 271–281; that stretch reads QPHEHQQERSS. Positions 304–313 are enriched in low complexity; sequence TSSRRGGRSS. The segment covering 403–412 has biased composition (gly residues); that stretch reads NGSGKSGSGG. 4 stretches are compositionally biased toward low complexity: residues 448-464, 554-568, 729-744, and 854-893; these read APAAKRSAAGKASRPAA, ASASSTSTSSNSGTS, SSSSNGNGSGSSSSSG, and ASTTASMDGDDGALSVADGSSSADAAIDPASGASPSAAAG. TPR repeat units follow at residues 851 to 884, 951 to 984, 985 to 1018, 1019 to 1052, 1053 to 1086, 1091 to 1124, 1125 to 1158, 1160 to 1193, and 1205 to 1238; these read RRGASTTASMDGDDGALSVADGSSSADAAIDPAS, GAVMHYWGSRELEAGNVRNARIVAAEALRKCPAD, VALYVLAASVELEASNLELAKGYCQRAYALDRTD, KQLFLIWPRVEAGLGDRDKARLLFERALDAHPLN, TKIINMYARFEAEEGSYREAAELYDRALQIDPLS, VHNRADWASMETDLGNTGLARQLLEEGLEAHPNS, AALLVVYSKLQRLEGRYQEALAAVRRAQAVAGAF, AAVMNERAQVLRALGERELAANLSRHVSAVKQLN, and AWRAFVEATRTPEQRTLVAAARAHRLQLGWAPAV. 2 disordered regions span residues 1237-1257 and 1333-1385; these read AVRGAKPGPPPGVVAGDGRRP and IQDP…ADDM. Over residues 1356-1365 the composition is skewed to acidic residues; it reads QDADYYEEPE. A compositionally biased stretch (basic and acidic residues) spans 1374–1385; sequence AVRRPMPDADDM.

Part of 2 complexes of about 600 and less than 2000 kDa, both of which also contain non-polysomal RNA.

Its subcellular location is the plastid. The protein localises to the chloroplast stroma. Its function is as follows. Involved, directly or indirectly, in the processing of the chloroplast encoded psbD mRNA to its mature form, acting via the 5'-UTR of the psbD mRNA. The last 588 amino acids of the protein are sufficient to confer stability on the transcript in vivo. The sequence is that of PsbD mRNA maturation factor Nac2, chloroplastic (NAC2) from Chlamydomonas reinhardtii (Chlamydomonas smithii).